We begin with the raw amino-acid sequence, 125 residues long: Small ribosomal subunit protein uS12m (125 aa).

The protein belongs to the universal ribosomal protein uS12 family.

Its subcellular location is the mitochondrion. Functionally, protein S12 is involved in the translation initiation step. In Brassica napus (Rape), this protein is Small ribosomal subunit protein uS12m (RPS12).